A 194-amino-acid polypeptide reads, in one-letter code: MSLQTVVEDIRDEARARAQEISDAADERAEEIIADAEADADQIREEREAEVERTIEQEREQRLSSAKLEAKQARLNARRDILEDVHGDVEDALAALEGDRREELTRALLDAAVDEFDDSDELSVYGRASDQSLLEDVLDDYDGATYAGERDCLGGVVVESNESRVRVNNTFDSILEDVWEDNLKAISDRLFEDQ.

The disordered stretch occupies residues 35–56 (DAEADADQIREEREAEVERTIE). Residues 41 to 56 (DQIREEREAEVERTIE) show a composition bias toward basic and acidic residues.

It belongs to the V-ATPase E subunit family. Has multiple subunits with at least A(3), B(3), C, D, E, F, H, I and proteolipid K(x).

It is found in the cell membrane. Functionally, component of the A-type ATP synthase that produces ATP from ADP in the presence of a proton gradient across the membrane. This is A-type ATP synthase subunit E from Haloarcula marismortui (strain ATCC 43049 / DSM 3752 / JCM 8966 / VKM B-1809) (Halobacterium marismortui).